The primary structure comprises 890 residues: Receptor like protein 23 (890 aa).

An N-terminal signal peptide occupies residues 1 to 22 (MSKALLHLHFLSLFLLCCVCHS). Residues 23–850 (SIFTLNFHFT…EEEEEVLNGR (828 aa)) lie on the Extracellular side of the membrane. 5 N-linked (GlcNAc...) asparagine glycosylation sites follow: asparagine 58, asparagine 70, asparagine 91, asparagine 109, and asparagine 145. 27 LRR repeats span residues 97–121 (FHQL…GFGN), 123–145 (KRLE…SFSN), 146–171 (LTML…GLRK), 173–195 (IVLD…LFEL), 196–218 (HQLR…KFGN), 220–243 (HRLE…ISNL), 244–268 (TRLT…NLTN), 270–290 (YELD…LLTL), 291–316 (PFLA…STSS), 318–339 (LEIM…ISKL), 340–363 (INLK…LFSS), 364–389 (LKSL…SYIP), 391–411 (TLEM…ILKT), 412–436 (LKEL…LWSL), 438–461 (LLQS…ILVN), 462–485 (SSVL…PLSI), 487–506 (GFGV…ICNR), 507–527 (SSLA…PPCL), 528–551 (RNLE…LCDG), 553–575 (SLRT…FVNC), 577–598 (SLKF…WLKA), 599–623 (LPNL…HQGP), 626–650 (FPEL…YFVN), 699–724 (LTSY…GLLK), 726–747 (LIAV…MANL), 748–771 (ENLE…LGSI), and 773–796 (FLAY…QITG). N-linked (GlcNAc...) asparagine glycosylation is found at asparagine 189, asparagine 207, asparagine 242, and asparagine 265. An N-linked (GlcNAc...) asparagine glycan is attached at asparagine 311. An N-linked (GlcNAc...) asparagine glycan is attached at asparagine 351. Asparagine 461 is a glycosylation site (N-linked (GlcNAc...) asparagine). 2 N-linked (GlcNAc...) asparagine glycosylation sites follow: asparagine 505 and asparagine 518. Asparagine 574 carries an N-linked (GlcNAc...) asparagine glycan. The N-linked (GlcNAc...) asparagine glycan is linked to asparagine 730. An N-linked (GlcNAc...) asparagine glycan is attached at asparagine 778. A helical transmembrane segment spans residues 851 to 871 (AVAIGYGSGLLLGLAIAQVIA). Residues 872-890 (SYKPEWLVKIIGLNKRRKR) are Cytoplasmic-facing.

Belongs to the RLP family. In terms of assembly, directly interacts with a 20-mer fragment (nlp20) from NLPs through its extracellular LRR domain. Component of a trimeric complex composed of RLP23, SOBIR1 and BAK1. BAK1 is recruited into a pre-formed RLP23-SOBIR1 complex in a ligand-dependent manner. Interacts with SOBIR1.

Its subcellular location is the cell membrane. Functionally, involved in the perception of necrosis and ethylene-inducing peptide 1-like proteins (NLPs), that act as extracellular signals mediating immune activation. Component of the RLP23-SOBIR1-BAK1 complex that mediates NLP-triggered immunity. This chain is Receptor like protein 23, found in Arabidopsis thaliana (Mouse-ear cress).